The primary structure comprises 258 residues: Tetraspanin-15 (258 aa).

At 1-20 (MGALGDSAYGARGRLIKFSY) the chain is on the cytoplasmic side. Residues 21 to 41 (IVTALISILFSISCICYGIWL) traverse the membrane as a helical segment. Over 42 to 62 (LARRSQYAELVSPSLYVDVGR) the chain is Extracellular. Residues 63-83 (ILVIISILSILNYLICFYAIF) form a helical membrane-spanning segment. Residues 84-93 (KEMRCFVTSC) are Cytoplasmic-facing. The helical transmembrane segment at 94-114 (AVASIVIAVMLIIGGCIGLNF) threads the bilayer. Residues 115-223 (RDQLTHYTPL…STCYEPLQND (109 aa)) lie on the Extracellular side of the membrane. The chain crosses the membrane as a helical span at residues 224 to 244 (LLHVMNVASWLCITNAIVQII). Topologically, residues 245–258 (PSVAGCWYSKLIRK) are cytoplasmic.

Belongs to the tetraspanin (TM4SF) family. Interacts with doxa-1 and bli-3. As to expression, expressed in the body wall (hyp7 hypodermal syncitium), pharynx and vulva. Expressed in a punctate pattern along the thick region of the hypodermis.

Its subcellular location is the membrane. Plays a role in cuticle biogenesis. In complex with doxa-1 and the dual oxidase bli-3, promotes the generation of reactive oxygen species (ROS) and tyrosine cross-linking of collagen, thus stabilizing cuticular extracellular matrix. The chain is Tetraspanin-15 from Caenorhabditis elegans.